The chain runs to 153 residues: ORM1-like protein 3 (153 aa).

The important for ceramide level-sensing stretch occupies residues 1–17; it reads MNVGTAHSEVNPNTRVM. Residues 1-21 lie on the Cytoplasmic side of the membrane; sequence MNVGTAHSEVNPNTRVMNSRG. The next 2 membrane-spanning stretches (helical) occupy residues 22 to 42 and 43 to 63; these read IWLSYVLAIGLLHVVLLSIPF and VSVPVVWTLTNLIHNLGMYIF. Topologically, residues 64–94 are cytoplasmic; the sequence is LHTVKGTPFETPDQGKARLLTHWEQMDYGVQ. Residues 95–117 form a helical membrane-spanning segment; sequence FTASRKFLTITPIVLYFLTSFYT. Residues 118–121 lie on the Extracellular side of the membrane; the sequence is KYDQ. Residues 122–142 traverse the membrane as a helical segment; sequence VHFILNTVSLMTVLIPKLPQL. Residue Pro-137 is modified to Hydroxyproline. Over 143 to 153 the chain is Cytoplasmic; that stretch reads HGVRIFGINKY.

This sequence belongs to the ORM family. Ceramide-sensitive subunit of the serine palmitoyltransferase (SPT) complex, which is also composed of SPTLC1, SPTLC2/3 and SPTSSA/B. In terms of processing, when hydroxylated at Pro-137, ubiquitinated via 'Lys-48'-linkage, leading to proteasomal degradation. In endothelial cells, ORMDL3 proteasomal degradation is controlled by the sphingosine 1-phosphate receptor signaling pathway.

It is found in the endoplasmic reticulum membrane. Functionally, plays an essential role in the homeostatic regulation of sphingolipid de novo biosynthesis by modulating the activity of the serine palmitoyltransferase (SPT) in response to ceramide levels. When complexed to SPT, the binding of ceramides to its N-terminus stabilizes a conformation that block SPT substrate entry, hence preventing SPT catalytic activity. Through this mechanism, maintains ceramide levels at sufficient concentrations for the production of complex sphingolipids, but which prevents the accumulation of ceramides to levels that trigger apoptosis. The chain is ORM1-like protein 3 (Ormdl3) from Mus musculus (Mouse).